The following is a 93-amino-acid chain: Antitoxin EndoAI (93 aa).

This sequence belongs to the MazE/EndoAI family. In terms of assembly, homodimer, forms a heterohexamer composed of alternating toxin and antitoxin homodimers which inhibits the toxin's endoribonuclease activity. Antitoxin prevents RNA binding to the endoribonuclease.

Its function is as follows. Antitoxin component of a type II toxin-antitoxin (TA) system. Antitoxin that directly inhibits activity of EndoA in vitro. Upon expression in E.coli counteracts inhibitory effect of endoribonuclease EndoA. The EndoA-EndoAI complex does not seem to bind its own promoter. This chain is Antitoxin EndoAI, found in Bacillus subtilis (strain 168).